A 184-amino-acid polypeptide reads, in one-letter code: Large ribosomal subunit protein bL9 (184 aa).

Residues 156–184 (RQAKLQNQKSEQQEAEQDASKEAADADDS) form a disordered region. A compositionally biased stretch (basic and acidic residues) spans 173-184 (DASKEAADADDS).

It belongs to the bacterial ribosomal protein bL9 family.

Binds to the 23S rRNA. In Wolbachia pipientis subsp. Culex pipiens (strain wPip), this protein is Large ribosomal subunit protein bL9.